A 769-amino-acid chain; its full sequence is Discoidin, CUB and LCCL domain-containing protein 2 (769 aa).

A compositionally biased stretch (low complexity) spans 1-29 (MASRAPLRAARSPQDPGGRAAPAATGRAP). The interval 1–39 (MASRAPLRAARSPQDPGGRAAPAATGRAPLPSAGWCPLP) is disordered. A signal peptide spans 1–63 (MASRAPLRAA…LLLLLPDAGA (63 aa)). The Extracellular segment spans residues 64-523 (QKGDGCGHTV…VTPSVTKDVA (460 aa)). Cystine bridges form between cysteine 69-cysteine 96 and cysteine 123-cysteine 145. The CUB domain maps to 69-184 (CGHTVLGPES…RGFLASYSVI (116 aa)). Asparagine 92 carries N-linked (GlcNAc...) asparagine glycosylation. Asparagine 152 carries an N-linked (GlcNAc...) asparagine glycan. The LCCL domain occupies 184–282 (IDKQDLITCL…MVGYLSTSLF (99 aa)). Cysteines 212 and 234 form a disulfide. An N-linked (GlcNAc...) asparagine glycan is attached at asparagine 269. Residues cysteine 289 and cysteine 446 are joined by a disulfide bond. The F5/8 type C domain occupies 289–446 (CYGTLGMESG…IAMKVELLGC (158 aa)). Residues 455–476 (PKLTQPPPPRNSNNLKNTTVHP) are disordered. A compositionally biased stretch (polar residues) spans 465–474 (NSNNLKNTTV). N-linked (GlcNAc...) asparagine glycosylation is found at asparagine 471 and asparagine 511. The helical transmembrane segment at 524–544 (LAAVLVPVLVMALTTLILILV) threads the bilayer. The Cytoplasmic portion of the chain corresponds to 545–769 (CAWHWRNRKK…EKFDAFKETL (225 aa)). Position 601 is a phosphoserine (serine 601). The disordered stretch occupies residues 719–769 (SCSSGQAQYDTPKGGKPAAAPEELVYQVPQSTQEASGAGRDEKFDAFKETL). Residues 757–769 (GRDEKFDAFKETL) show a composition bias toward basic and acidic residues.

The protein resides in the membrane. In Rattus norvegicus (Rat), this protein is Discoidin, CUB and LCCL domain-containing protein 2 (Dcbld2).